Reading from the N-terminus, the 447-residue chain is Guanine nucleotide-binding protein alpha-1 subunit (447 aa).

Gly2 carries N-myristoyl glycine lipidation. A lipid anchor (S-palmitoyl cysteine) is attached at Cys3. Residues Asn40 to Leu447 enclose the G-alpha domain. The tract at residues Lys43–Thr56 is G1 motif. Glu51, Ser52, Gly53, Lys54, Ser55, Thr56, Leu269, Thr275, Gly297, Asn363, Lys364, Asp366, and Ala419 together coordinate GTP. Ser55 contributes to the Mg(2+) binding site. The interval Asp267 to Thr275 is G2 motif. A Mg(2+)-binding site is contributed by Thr275. Residues Phe290–Arg299 are G3 motif. The interval Ile359–Asp366 is G4 motif. A G5 motif region spans residues Thr417 to Thr422.

Belongs to the G-alpha family. G proteins are composed of 3 units; alpha, beta and gamma. The alpha chain contains the guanine nucleotide binding site. Mg(2+) is required as a cofactor.

In terms of biological role, guanine nucleotide-binding proteins (G proteins) are involved as modulators or transducers in various transmembrane signaling systems. This protein is involved in the mating response pathway. In Kluyveromyces lactis (strain ATCC 8585 / CBS 2359 / DSM 70799 / NBRC 1267 / NRRL Y-1140 / WM37) (Yeast), this protein is Guanine nucleotide-binding protein alpha-1 subunit (GPA1).